A 1647-amino-acid polypeptide reads, in one-letter code: Cortactin-binding protein 2 (1647 aa).

Disordered stretches follow at residues 1–27 (MATD…AEAA), 202–222 (EKKK…RSTE), 318–427 (HVKK…QPGL), 440–468 (GNAN…RDNL), and 482–604 (LSRF…PSID). Residues 120 to 276 (KMQERMATQL…EQLKRGSDSK (157 aa)) are a coiled coil. Over residues 362 to 372 (SSAPSLPPASA) the composition is skewed to low complexity. Residues 379-388 (GPSTGSTADL) are compositionally biased toward polar residues. Positions 389 to 411 (PSSTAPAPGSAAQSPVAAALGPA) are enriched in low complexity. Over residues 440–466 (GNANDPDQNGNTTQSPPSRDVSPTSRD) the composition is skewed to polar residues. At R484 the chain carries Asymmetric dimethylarginine. The segment covering 488–509 (PAVGAAPRPGAPPTGDAGAYPP) has biased composition (low complexity). A compositionally biased stretch (polar residues) spans 569–579 (TVASPPSSLPQ). ANK repeat units lie at residues 695-725 (GRPT…DINY), 729-758 (DGHS…QVNA), 762-791 (NGFT…NINH), 795-824 (GGQT…DRSV), and 828-857 (DGWT…PAHG). The interval 856–886 (HGNSLNEEEPESDVSDLDDGEESSEGESKPV) is disordered. The segment covering 861–880 (NEEEPESDVSDLDDGEESSE) has biased composition (acidic residues). The ANK 6 repeat unit spans residues 898–928 (EGWTAAHIAASKGFKNCLEILCRHRGLEPER). The segment at 1436-1467 (ENGAWRKVNTSPRRKSGRFSSPTWNKPDLSNE) is disordered. S1509 bears the Phosphoserine mark. A disordered region spans residues 1542 to 1647 (RTFDSSGNNP…HKNEQTHRKT (106 aa)). Composition is skewed to polar residues over residues 1544 to 1559 (FDSS…TVNN) and 1567 to 1584 (KEVS…SNNK). The span at 1609 to 1623 (SQNTKRSSSSSNTRQ) shows a compositional bias: low complexity. The segment covering 1630 to 1647 (SKEENWNLHKNEQTHRKT) has biased composition (basic and acidic residues).

As to quaternary structure, interacts with CTTN/cortactin SH3 domain. Interacts with STRN, STRN4/zinedin and MOB4/phocein; this interactions mediate the association with the STRIPAK core complex and may regulate dendritic spine distribution of the STRIPAK complex in hippocampal neurons. Activation of glutamate receptors weakens the interaction with STRN and STRN4.

It localises to the cytoplasm. The protein localises to the cell cortex. Its subcellular location is the cell projection. The protein resides in the dendritic spine. In terms of biological role, regulates the dendritic spine distribution of CTTN/cortactin in hippocampal neurons, and thus controls dendritic spinogenesis and dendritic spine maintenance. Associates with the striatin-interacting phosphatase and kinase (STRIPAK) core complex to regulate dendritic spine distribution of the STRIPAK complex in hippocampal neurons. The chain is Cortactin-binding protein 2 (CTTNBP2) from Microcebus murinus (Gray mouse lemur).